The sequence spans 764 residues: Myotubularin-related protein 10-B (764 aa).

The 442-residue stretch at 208–649 (FESYSDWDRE…THIQIWKLCY (442 aa)) folds into the Myotubularin phosphatase domain.

Belongs to the protein-tyrosine phosphatase family. Non-receptor class myotubularin subfamily.

In Xenopus laevis (African clawed frog), this protein is Myotubularin-related protein 10-B (mtmr10-b).